Here is a 145-residue protein sequence, read N- to C-terminus: Lipoprotein signal peptidase (145 aa).

3 helical membrane-spanning segments follow: residues 1-21 (MVYI…LLVM), 57-77 (YLFI…YYKT), and 79-99 (GSGM…GNLI). Catalysis depends on residues Asp109 and Asp123. Residues 115-135 (IWPVFNLADSSVVIGAALLIL) form a helical membrane-spanning segment.

Belongs to the peptidase A8 family.

It localises to the cell inner membrane. The catalysed reaction is Release of signal peptides from bacterial membrane prolipoproteins. Hydrolyzes -Xaa-Yaa-Zaa-|-(S,diacylglyceryl)Cys-, in which Xaa is hydrophobic (preferably Leu), and Yaa (Ala or Ser) and Zaa (Gly or Ala) have small, neutral side chains.. The protein operates within protein modification; lipoprotein biosynthesis (signal peptide cleavage). This protein specifically catalyzes the removal of signal peptides from prolipoproteins. This Halothermothrix orenii (strain H 168 / OCM 544 / DSM 9562) protein is Lipoprotein signal peptidase.